The following is a 138-amino-acid chain: Transcription antitermination protein NusB (138 aa).

The protein belongs to the NusB family.

Its function is as follows. Involved in transcription antitermination. Required for transcription of ribosomal RNA (rRNA) genes. Binds specifically to the boxA antiterminator sequence of the ribosomal RNA (rrn) operons. In Leptospira borgpetersenii serovar Hardjo-bovis (strain JB197), this protein is Transcription antitermination protein NusB.